Consider the following 637-residue polypeptide: MIESNDYEQERLKNIRENERLMKELGVMGGSSTIGGPSSKRTTPTKPKKQATPKKKPDTTPTRIMPSRSSARLAGHEADSETLKRKYEEEAEEARKVAEAAKRARHQPFDLSGMTGGELEEEAIMALESTLQGLANNTSSAAELVDTKDENKRRSANKPDPQFSTERRELEDILNKMTLKSAAKVTPKRIYSMAYHPSTDKDLVFVGDKEGSIGVWDAAPVAFASNRNGVKTADDQDEDAEERFPEGKAWTLQVHARSPVTCIKFDPVNHNSVLSSSYDSTVRKLDLATAKSEEIWAGEEDVLLSIFDVLSPSTHPSVYMDTPNPSLDERSMWIADHRGGLLHIDLRERTRRGNNTRRWQVCEKKIGAMSVNRLAPHCIATASLDQHIRLFDVRALASVVKQTADAPYNYKGVDADDLESAQTKAQFASSKARQACTSVDFSPRGDQLVGVSYDDVVKVWSMEPGSLFSEHGLKNRIATAKSNKPKGAVKKQVPDSASDTGPGLLSWLSRATPLGTKKDVAEAIKQEQDAPSPSLSKRPDDVLANPTRIPHNNQTGKWLTLFRAKWNQNALLEPHFTIGSMSRRAEVYAADGTLLRSLWDENLVTAVPAVTCMHPVLPARLVTGNASGRCTFWSPDP.

Disordered regions lie at residues 1 to 91 (MIES…EEEA) and 144 to 168 (LVDT…TERR). Composition is skewed to basic and acidic residues over residues 8 to 23 (EQER…RLMK) and 74 to 91 (AGHE…EEEA). WD repeat units follow at residues 185–226 (VTPK…FASN), 255–295 (HARS…SEEI), 297–321 (AGEE…VYMD), 361–401 (VCEK…SVVK), and 431–470 (KARQ…LFSE). 2 disordered regions span residues 482-508 (SNKP…LSWL) and 525-549 (KQEQ…PTRI). 2 WD repeats span residues 556-598 (GKWL…LRSL) and 602-637 (NLVT…SPDP).

This sequence belongs to the WD repeat DDB2/WDR76 family.

In terms of biological role, DNA-binding protein that binds to both single- and double-stranded DNA. Binds preferentially to UV-damaged DNA. May be involved in DNA-metabolic processes. The sequence is that of DNA damage-binding protein CMR1 from Mycosarcoma maydis (Corn smut fungus).